The primary structure comprises 136 residues: Large ribosomal subunit protein uL16 (136 aa).

It belongs to the universal ribosomal protein uL16 family. In terms of assembly, part of the 50S ribosomal subunit.

Its function is as follows. Binds 23S rRNA and is also seen to make contacts with the A and possibly P site tRNAs. The polypeptide is Large ribosomal subunit protein uL16 (Erwinia tasmaniensis (strain DSM 17950 / CFBP 7177 / CIP 109463 / NCPPB 4357 / Et1/99)).